A 602-amino-acid polypeptide reads, in one-letter code: Aspartate--tRNA(Asp/Asn) ligase (602 aa).

Residue Glu-170 participates in L-aspartate binding. The segment at 194–197 (QLFK) is aspartate. Arg-216 provides a ligand contact to L-aspartate. ATP contacts are provided by residues 216–218 (RDE) and Gln-225. An L-aspartate-binding site is contributed by His-448. Residue Glu-482 participates in ATP binding. Position 489 (Arg-489) interacts with L-aspartate. 534–537 (GWDR) is an ATP binding site. Positions 559–602 (GGVDPLTNAPAPITAQQRKESGVDAKPEPKGDAASAKPDAPADK) are disordered. A compositionally biased stretch (basic and acidic residues) spans 575 to 589 (QRKESGVDAKPEPKG). Low complexity predominate over residues 590–602 (DAASAKPDAPADK).

Belongs to the class-II aminoacyl-tRNA synthetase family. Type 1 subfamily. Homodimer.

The protein localises to the cytoplasm. The catalysed reaction is tRNA(Asx) + L-aspartate + ATP = L-aspartyl-tRNA(Asx) + AMP + diphosphate. Functionally, aspartyl-tRNA synthetase with relaxed tRNA specificity since it is able to aspartylate not only its cognate tRNA(Asp) but also tRNA(Asn). Reaction proceeds in two steps: L-aspartate is first activated by ATP to form Asp-AMP and then transferred to the acceptor end of tRNA(Asp/Asn). This is Aspartate--tRNA(Asp/Asn) ligase from Rhodococcus jostii (strain RHA1).